A 368-amino-acid chain; its full sequence is MDPIKHISLPVLVLFLLLSVSAGQPGTPDQRHDPYAYSGSLSPAMAVVVVVVIAALFFMGFFTVYIRHCTGAVDGSVTPAGGARRRVTNATVARGLDAETIETFPTFVYSEVKTQKIGKGALECAICLNEFEDDETLRLLPKCDHVFHPHCIGAWLQGHVTCPVCRTNLAEQTPEPEVVVETDLEAQQQSAVPVPVVELPRVKFPRSHTTGHSVVLPGESTDRFTLRVPEELRKKIMANWKLNRSNSVFVLPRGGSSRSGKQVDRSRAKSDRWLFRKTPSFLWRNRDDGSIRLGGTGSVRGNSVTSPSGDSVRADRWAFLRNPSFLWRNTTPVPSPRVEVNNKDGEGTSSVQHIGTVGSTSGSLRLPV.

A signal peptide spans 1-23 (MDPIKHISLPVLVLFLLLSVSAG). Residues 46–66 (AVVVVVVIAALFFMGFFTVYI) traverse the membrane as a helical segment. An RING-type; atypical zinc finger spans residues 124–166 (CAICLNEFEDDETLRLLPKCDHVFHPHCIGAWLQGHVTCPVCR). Ser247 is subject to Phosphoserine. Residues 342–368 (NKDGEGTSSVQHIGTVGSTSGSLRLPV) form a disordered region. The span at 347–368 (GTSSVQHIGTVGSTSGSLRLPV) shows a compositional bias: polar residues.

This sequence belongs to the RING-type zinc finger family. ATL subfamily.

Its subcellular location is the membrane. The enzyme catalyses S-ubiquitinyl-[E2 ubiquitin-conjugating enzyme]-L-cysteine + [acceptor protein]-L-lysine = [E2 ubiquitin-conjugating enzyme]-L-cysteine + N(6)-ubiquitinyl-[acceptor protein]-L-lysine.. It participates in protein modification; protein ubiquitination. Functionally, E3 ubiquitin-protein ligase that is required for the plant C/N response during seedling growth transition. May be involved in the early steps of the plant defense signaling pathway. The protein is E3 ubiquitin-protein ligase ATL31 (ATL31) of Arabidopsis thaliana (Mouse-ear cress).